We begin with the raw amino-acid sequence, 381 residues long: Hydrogenase nickel incorporation protein HupN (381 aa).

Residues 1 to 39 (MLPFSMTGLEKDHTRGVLILANAHRRSERSRTASCAGPA) are Cytoplasmic-facing. A helical transmembrane segment spans residues 40–60 (VLFGGLITANIVAWAWAFALF). At 61-63 (ADR) the chain is on the periplasmic side. Residues 64–84 (PVVMATALLAWVFGLRHAVDA) form a helical membrane-spanning segment. Topologically, residues 85–110 (DHIAAIDNVVRSLMQTGGTPRSAGLY) are cytoplasmic. The chain crosses the membrane as a helical span at residues 111-131 (FALGHSSVVVVATMLLALGVV). Over 132–149 (SLGGDGLLKEIGSFIGAS) the chain is Periplasmic. The helical transmembrane segment at 150 to 170 (VSALFLLVIAAINLAIFASLW) threads the bilayer. Residues 171-215 (RTFRKAREQGIRDAAGLDALLAHRGILVRLLGPMFRLVTKPWHMY) lie on the Cytoplasmic side of the membrane. The chain crosses the membrane as a helical span at residues 216-236 (PLGFLFGLGFDTATEIGLLSI). Over 237 to 243 (SASEAAR) the chain is Periplasmic. The chain crosses the membrane as a helical span at residues 244 to 264 (GASLADVMVFPALFAAGMALV). Over 265–292 (DTADSTLMVSAYRWAFVDPMRKLWYNLT) the chain is Cytoplasmic. Residues 293–313 (ITGASVAVALFIGGIEALGLI) traverse the membrane as a helical segment. The Periplasmic segment spans residues 314 to 333 (GNRLDLSGGVWTLIDALNES). A helical transmembrane segment spans residues 334-354 (LANVGLAVIALFAIAWLLSIV). Topologically, residues 355 to 381 (LYRRLIAGSSGLADTEVLECADATEAV) are cytoplasmic.

The protein belongs to the NiCoT transporter (TC 2.A.52) family.

The protein localises to the cell inner membrane. Its function is as follows. Involved in nickel incorporation/metabolism into the hydrogenase apoprotein. This Bradyrhizobium diazoefficiens (strain JCM 10833 / BCRC 13528 / IAM 13628 / NBRC 14792 / USDA 110) protein is Hydrogenase nickel incorporation protein HupN (hupN).